The primary structure comprises 253 residues: Precorrin-4 C(11)-methyltransferase (253 aa).

Belongs to the precorrin methyltransferase family.

The enzyme catalyses precorrin-4 + S-adenosyl-L-methionine = precorrin-5 + S-adenosyl-L-homocysteine. It participates in cofactor biosynthesis; adenosylcobalamin biosynthesis; cob(II)yrinate a,c-diamide from precorrin-2 (aerobic route): step 4/10. Catalyzes the methylation of C-11 in precorrin-4 to form precorrin-5. This is Precorrin-4 C(11)-methyltransferase (cobM) from Sinorhizobium sp.